The primary structure comprises 518 residues: Protein nucleotidyltransferase YdiU (518 aa).

A compositionally biased stretch (basic and acidic residues) spans 1–10; that stretch reads MTHLRFDNRL. The segment at 1-23 is disordered; that stretch reads MTHLRFDNRLRQQLPGDPEEGSR. Glycine 100, glycine 102, arginine 103, lysine 123, aspartate 135, glycine 136, arginine 193, and arginine 200 together coordinate ATP. Aspartate 270 functions as the Proton acceptor in the catalytic mechanism. 2 residues coordinate Mg(2+): asparagine 271 and aspartate 280. Residue aspartate 280 participates in ATP binding.

This sequence belongs to the SELO family. Requires Mg(2+) as cofactor. Mn(2+) is required as a cofactor.

It carries out the reaction L-seryl-[protein] + ATP = 3-O-(5'-adenylyl)-L-seryl-[protein] + diphosphate. The catalysed reaction is L-threonyl-[protein] + ATP = 3-O-(5'-adenylyl)-L-threonyl-[protein] + diphosphate. The enzyme catalyses L-tyrosyl-[protein] + ATP = O-(5'-adenylyl)-L-tyrosyl-[protein] + diphosphate. It catalyses the reaction L-histidyl-[protein] + UTP = N(tele)-(5'-uridylyl)-L-histidyl-[protein] + diphosphate. It carries out the reaction L-seryl-[protein] + UTP = O-(5'-uridylyl)-L-seryl-[protein] + diphosphate. The catalysed reaction is L-tyrosyl-[protein] + UTP = O-(5'-uridylyl)-L-tyrosyl-[protein] + diphosphate. In terms of biological role, nucleotidyltransferase involved in the post-translational modification of proteins. It can catalyze the addition of adenosine monophosphate (AMP) or uridine monophosphate (UMP) to a protein, resulting in modifications known as AMPylation and UMPylation. The sequence is that of Protein nucleotidyltransferase YdiU from Xanthomonas axonopodis pv. citri (strain 306).